We begin with the raw amino-acid sequence, 394 residues long: Olfactomedin-like protein 3B (394 aa).

The signal sequence occupies residues 1-18 (MKATIFFLLLTVLAHSRS). Residues 29–94 (LENRMLAMEE…RVDRVEREMD (66 aa)) adopt a coiled-coil conformation. One can recognise an Olfactomedin-like domain in the interval 132 to 383 (VCVNIISSLK…QILYKLELKK (252 aa)). Cys-133 and Cys-310 form a disulfide bridge. Asn-169, Asn-204, and Asn-233 each carry an N-linked (GlcNAc...) asparagine glycan.

Belongs to the OLFML3 family.

Its subcellular location is the secreted. In terms of biological role, secreted scaffold protein that plays an essential role in dorsoventral patterning during early development. Stabilizes axial formation by restricting chordin (CHRD) activity on the dorsal side. Acts by facilitating the association between the tolloid proteases and their substrate chordin (CHRD), leading to enhance chordin (CHRD) degradation. This chain is Olfactomedin-like protein 3B (olfml3b), found in Danio rerio (Zebrafish).